A 227-amino-acid polypeptide reads, in one-letter code: Cytochrome c oxidase subunit 2 (227 aa).

The Mitochondrial intermembrane portion of the chain corresponds to 1-14 (MAYPFQLGLQDATS). The helical transmembrane segment at 15 to 45 (PIMEELTNFHDHTLMIVFLISTLVLYIISLM) threads the bilayer. Residues 46 to 59 (LTTKLTHTSTMDAQ) lie on the Mitochondrial matrix side of the membrane. Residues 60–87 (EVETIWTILPAVILILIALPSLRILYMM) traverse the membrane as a helical segment. Over 88–227 (DEINNPVLTV…YFENWSASMI (140 aa)) the chain is Mitochondrial intermembrane. Cu cation is bound by residues H161, C196, E198, C200, H204, and M207. Residue E198 participates in Mg(2+) binding. Y218 carries the phosphotyrosine modification.

This sequence belongs to the cytochrome c oxidase subunit 2 family. As to quaternary structure, component of the cytochrome c oxidase (complex IV, CIV), a multisubunit enzyme composed of 14 subunits. The complex is composed of a catalytic core of 3 subunits MT-CO1, MT-CO2 and MT-CO3, encoded in the mitochondrial DNA, and 11 supernumerary subunits COX4I, COX5A, COX5B, COX6A, COX6B, COX6C, COX7A, COX7B, COX7C, COX8 and NDUFA4, which are encoded in the nuclear genome. The complex exists as a monomer or a dimer and forms supercomplexes (SCs) in the inner mitochondrial membrane with NADH-ubiquinone oxidoreductase (complex I, CI) and ubiquinol-cytochrome c oxidoreductase (cytochrome b-c1 complex, complex III, CIII), resulting in different assemblies (supercomplex SCI(1)III(2)IV(1) and megacomplex MCI(2)III(2)IV(2)). Found in a complex with TMEM177, COA6, COX18, COX20, SCO1 and SCO2. Interacts with TMEM177 in a COX20-dependent manner. Interacts with COX20. Interacts with COX16. It depends on Cu cation as a cofactor.

Its subcellular location is the mitochondrion inner membrane. It carries out the reaction 4 Fe(II)-[cytochrome c] + O2 + 8 H(+)(in) = 4 Fe(III)-[cytochrome c] + 2 H2O + 4 H(+)(out). Component of the cytochrome c oxidase, the last enzyme in the mitochondrial electron transport chain which drives oxidative phosphorylation. The respiratory chain contains 3 multisubunit complexes succinate dehydrogenase (complex II, CII), ubiquinol-cytochrome c oxidoreductase (cytochrome b-c1 complex, complex III, CIII) and cytochrome c oxidase (complex IV, CIV), that cooperate to transfer electrons derived from NADH and succinate to molecular oxygen, creating an electrochemical gradient over the inner membrane that drives transmembrane transport and the ATP synthase. Cytochrome c oxidase is the component of the respiratory chain that catalyzes the reduction of oxygen to water. Electrons originating from reduced cytochrome c in the intermembrane space (IMS) are transferred via the dinuclear copper A center (CU(A)) of subunit 2 and heme A of subunit 1 to the active site in subunit 1, a binuclear center (BNC) formed by heme A3 and copper B (CU(B)). The BNC reduces molecular oxygen to 2 water molecules using 4 electrons from cytochrome c in the IMS and 4 protons from the mitochondrial matrix. This chain is Cytochrome c oxidase subunit 2 (MT-CO2), found in Leopoldamys sabanus (Long-tailed giant rat).